Consider the following 906-residue polypeptide: Inactive angiotensin-converting enzyme-related protein (906 aa).

A signal peptide spans 1-19 (MKFHILLLLLVGACLPVFT). The segment at 28-95 (LLPADEAPKD…SPTPEPEPAI (68 aa)) is disordered. Basic and acidic residues predominate over residues 67–83 (PEPKPEPEPEPEPKPEP). N159 carries N-linked (GlcNAc...) asparagine glycosylation. Positions 175-765 (IKDEEKLRSW…EIDQVVVGWD (591 aa)) constitute a Peptidase M2 domain. Cysteines 289 and 297 form a disulfide. N-linked (GlcNAc...) asparagine glycosylation occurs at N653. A disordered region spans residues 862–882 (VTTPEPSAEPEPTAKTTTKMP). Residues 863 to 882 (TTPEPSAEPEPTAKTTTKMP) are compositionally biased toward low complexity.

This sequence belongs to the peptidase M2 family. In terms of tissue distribution, expressed in the hypodermis, in the vulva during organogenesis, and in the ray papillae of the male tail.

Inactive as a metallopeptidase, due to a lack of active site residues. Required for larval molting, male tail development, and formation of adult alae. Acts in the heterochronic pathway and plays a role in the developmental timing of postembryonic hypodermal seam cell division and adult alae production. Acts synergistically with apl-1 in let-7 regulated postembryonic cell division events. Might act downstream of the heterochronic protein lin-41. Negative regulator of lifespan, heat and oxidative stress response and age-related degenerative changes like reduced pharyngeal pumping and decreased body movements. Lifespan restriction is dependent on the forkhead-type transcription factor daf-16. The sequence is that of Inactive angiotensin-converting enzyme-related protein from Caenorhabditis elegans.